Consider the following 245-residue polypeptide: tRNA1(Val) (adenine(37)-N6)-methyltransferase (245 aa).

This sequence belongs to the methyltransferase superfamily. tRNA (adenine-N(6)-)-methyltransferase family.

The protein resides in the cytoplasm. The catalysed reaction is adenosine(37) in tRNA1(Val) + S-adenosyl-L-methionine = N(6)-methyladenosine(37) in tRNA1(Val) + S-adenosyl-L-homocysteine + H(+). Functionally, specifically methylates the adenine in position 37 of tRNA(1)(Val) (anticodon cmo5UAC). The chain is tRNA1(Val) (adenine(37)-N6)-methyltransferase (yfiC) from Escherichia coli (strain K12).